The chain runs to 265 residues: Undecaprenyl-diphosphatase (265 aa).

8 consecutive transmembrane segments (helical) span residues F19–G39, A42–W62, I80–A100, L108–V128, M143–F163, S181–Y201, I220–V240, and I243–W263.

This sequence belongs to the UppP family.

It is found in the cell inner membrane. The enzyme catalyses di-trans,octa-cis-undecaprenyl diphosphate + H2O = di-trans,octa-cis-undecaprenyl phosphate + phosphate + H(+). In terms of biological role, catalyzes the dephosphorylation of undecaprenyl diphosphate (UPP). Confers resistance to bacitracin. The protein is Undecaprenyl-diphosphatase of Solidesulfovibrio magneticus (strain ATCC 700980 / DSM 13731 / RS-1) (Desulfovibrio magneticus).